The following is a 600-amino-acid chain: Elongation factor 4 (600 aa).

Residues 6-188 (QFIRNFSIIA…QITKQIPSPK (183 aa)) enclose the tr-type G domain. Residues 18–23 (DHGKST) and 135–138 (NKID) contribute to the GTP site.

Belongs to the TRAFAC class translation factor GTPase superfamily. Classic translation factor GTPase family. LepA subfamily.

The protein resides in the cell inner membrane. The catalysed reaction is GTP + H2O = GDP + phosphate + H(+). Required for accurate and efficient protein synthesis under certain stress conditions. May act as a fidelity factor of the translation reaction, by catalyzing a one-codon backward translocation of tRNAs on improperly translocated ribosomes. Back-translocation proceeds from a post-translocation (POST) complex to a pre-translocation (PRE) complex, thus giving elongation factor G a second chance to translocate the tRNAs correctly. Binds to ribosomes in a GTP-dependent manner. The sequence is that of Elongation factor 4 from Leptospira interrogans serogroup Icterohaemorrhagiae serovar copenhageni (strain Fiocruz L1-130).